The following is a 417-amino-acid chain: Gamma-glutamyl phosphate reductase (417 aa).

Belongs to the gamma-glutamyl phosphate reductase family.

Its subcellular location is the cytoplasm. It catalyses the reaction L-glutamate 5-semialdehyde + phosphate + NADP(+) = L-glutamyl 5-phosphate + NADPH + H(+). Its pathway is amino-acid biosynthesis; L-proline biosynthesis; L-glutamate 5-semialdehyde from L-glutamate: step 2/2. Catalyzes the NADPH-dependent reduction of L-glutamate 5-phosphate into L-glutamate 5-semialdehyde and phosphate. The product spontaneously undergoes cyclization to form 1-pyrroline-5-carboxylate. This is Gamma-glutamyl phosphate reductase from Aeromonas salmonicida (strain A449).